Consider the following 1104-residue polypeptide: Lon protease homolog, mitochondrial (1104 aa).

The N-terminal 58 residues, 1 to 58 (MLPLRAFARLAQRPRLSRPTQLARSSLPRPSPSRPAAHYLALAPAPSTRFLHSSPPVL), are a transit peptide targeting the mitochondrion. The segment at 8-144 (ARLAQRPRLS…PGAGGPKEVA (137 aa)) is disordered. The segment covering 22 to 46 (LARSSLPRPSPSRPAAHYLALAPAP) has biased composition (low complexity). Over residues 80–103 (KQDDQVEKPLPDAESSKSAEERAK) the composition is skewed to basic and acidic residues. Low complexity predominate over residues 104–128 (SQSSKPDIKASSSDSVSSSAPAPGS). The segment covering 129-139 (ADGGSPPGAGG) has biased composition (gly residues). In terms of domain architecture, Lon N-terminal spans 155–444 (VLAIPITHRP…RALVLLKKEL (290 aa)). ATP is bound at residue 597–604 (GPPGVGKT). One can recognise a Lon proteolytic domain in the interval 895 to 1082 (SPPAGVSTGL…RQVLHEAFRG (188 aa)). Active-site residues include serine 987 and lysine 1030.

It belongs to the peptidase S16 family. In terms of assembly, homohexamer or homoheptamer. Organized in a ring with a central cavity.

The protein localises to the mitochondrion matrix. The enzyme catalyses Hydrolysis of proteins in presence of ATP.. ATP-dependent serine protease that mediates the selective degradation of misfolded, unassembled or oxidatively damaged polypeptides as well as certain short-lived regulatory proteins in the mitochondrial matrix. May also have a chaperone function in the assembly of inner membrane protein complexes. Participates in the regulation of mitochondrial gene expression and in the maintenance of the integrity of the mitochondrial genome. Binds to mitochondrial DNA in a site-specific manner. This chain is Lon protease homolog, mitochondrial, found in Cryptococcus neoformans var. neoformans serotype D (strain B-3501A) (Filobasidiella neoformans).